Consider the following 69-residue polypeptide: Large ribosomal subunit protein bL31 (69 aa).

Zn(2+) contacts are provided by Cys16, Cys18, Cys37, and Cys40.

The protein belongs to the bacterial ribosomal protein bL31 family. Type A subfamily. Part of the 50S ribosomal subunit. The cofactor is Zn(2+).

Its function is as follows. Binds the 23S rRNA. The protein is Large ribosomal subunit protein bL31 of Buchnera aphidicola subsp. Baizongia pistaciae (strain Bp).